The primary structure comprises 123 residues: Large ribosomal subunit protein uL14c (123 aa).

The protein belongs to the universal ribosomal protein uL14 family. As to quaternary structure, part of the 50S ribosomal subunit.

The protein resides in the plastid. The protein localises to the chloroplast. Binds to 23S rRNA. In Triticum aestivum (Wheat), this protein is Large ribosomal subunit protein uL14c.